The primary structure comprises 616 residues: MALLQISEPGLSAAPHQRRLAAGIDLGTTNSLVATVRSGQAETLPDHEGRHLLPSVVHYQQQGHTVGYAARDNAAQDTANTISSVKRMMGRSLADIQARYPHLPYRFKASVNGLPMIDTSAGLLNPVRVSADILKALAARASESLSGELDGVVITVPAYFDDAQRQGTKDAARLAGLHVLRLLNEPTAAAIAYGLDSGKEGVIAVYDLGGGTFDISILRLSRGVFEVLATGGDSALGGDDFDHLLADYIREQAGIADRSDNRVQRELLDAAIAAKIALSDADTVRVNVAGWQGEITREQFNDLISALVKRTLLACRRALKDAGVEPQDVLEVVMVGGSTRVPLVRERVGEFFGRTPLTAIDPDKVVAIGAAIQADILVGNKPDSEMLLLDVIPLSLGLETMGGLVEKVIPRNTTIPVARAQDFTTFKDGQTAMSIHVMQGERELVQDCRSLARFALRGIPPLPAGGAHIRVTFQVDADGLLSVTAMEKSTGVEASIQVKPSYGLTDGEIASMIKDSMSFAEQDVKARMLAEQKVEAARVLESLTGALTADAALLSAAERQCIDDAAAHLSAVAQGDDVDAIEQAIKNVDKQTQEFAARRMDQSVRRALKGHSVDEV.

The protein belongs to the heat shock protein 70 family.

Its function is as follows. Chaperone involved in the maturation of iron-sulfur cluster-containing proteins. Has a low intrinsic ATPase activity which is markedly stimulated by HscB. Involved in the maturation of IscU. This Salmonella paratyphi C (strain RKS4594) protein is Chaperone protein HscA.